The sequence spans 365 residues: Succinate--CoA ligase [ADP-forming] subunit beta (365 aa).

In terms of domain architecture, ATP-grasp spans 9–230 (KEIFRAEGIS…EMEEYEPEEF (222 aa)). Residues Lys45, 52 to 54 (GRG), Glu90, Ile93, and Glu98 each bind ATP. Mg(2+) contacts are provided by Asn190 and Asp203. Substrate is bound by residues Asn244 and 300–302 (GIT).

This sequence belongs to the succinate/malate CoA ligase beta subunit family. Heterotetramer of two alpha and two beta subunits. The cofactor is Mg(2+).

It carries out the reaction succinate + ATP + CoA = succinyl-CoA + ADP + phosphate. The catalysed reaction is GTP + succinate + CoA = succinyl-CoA + GDP + phosphate. It participates in carbohydrate metabolism; tricarboxylic acid cycle; succinate from succinyl-CoA (ligase route): step 1/1. Its function is as follows. Succinyl-CoA synthetase functions in the citric acid cycle (TCA), coupling the hydrolysis of succinyl-CoA to the synthesis of either ATP or GTP and thus represents the only step of substrate-level phosphorylation in the TCA. The beta subunit provides nucleotide specificity of the enzyme and binds the substrate succinate, while the binding sites for coenzyme A and phosphate are found in the alpha subunit. This is Succinate--CoA ligase [ADP-forming] subunit beta from Methanothermobacter thermautotrophicus (strain ATCC 29096 / DSM 1053 / JCM 10044 / NBRC 100330 / Delta H) (Methanobacterium thermoautotrophicum).